The sequence spans 398 residues: Acetylornithine aminotransferase (398 aa).

Phe129 is a pyridoxal 5'-phosphate binding site. Residue Arg132 participates in N(2)-acetyl-L-ornithine binding. 214-217 contacts pyridoxal 5'-phosphate; it reads DEVQ. Lys243 carries the N6-(pyridoxal phosphate)lysine modification. Residue Ser271 coordinates N(2)-acetyl-L-ornithine. Residue Thr272 coordinates pyridoxal 5'-phosphate.

It belongs to the class-III pyridoxal-phosphate-dependent aminotransferase family. ArgD subfamily. As to quaternary structure, homodimer. Pyridoxal 5'-phosphate is required as a cofactor.

It localises to the cytoplasm. It carries out the reaction N(2)-acetyl-L-ornithine + 2-oxoglutarate = N-acetyl-L-glutamate 5-semialdehyde + L-glutamate. It functions in the pathway amino-acid biosynthesis; L-arginine biosynthesis; N(2)-acetyl-L-ornithine from L-glutamate: step 4/4. The protein is Acetylornithine aminotransferase of Neisseria meningitidis serogroup B (strain ATCC BAA-335 / MC58).